The chain runs to 338 residues: Clathrin light chain 1 (338 aa).

Residues 1-111 form a disordered region; the sequence is MATFDDGDFP…NEMREEGFQR (111 aa). Composition is skewed to polar residues over residues 29-47 and 61-73; these read SEAQ…SSFN and SSPN…PFES. Residues 102–111 are compositionally biased toward basic and acidic residues; sequence NEMREEGFQR. The segment at 102–163 is involved in binding clathrin heavy chain; the sequence is NEMREEGFQR…TIETNKTDNR (62 aa). Positions 122–142 form a coiled coil; that stretch reads LEEKEKKEKEMRNQIITEAED. A disordered region spans residues 192 to 338; it reads IPREVPNIEK…VTEAEGTKAE (147 aa). Residues 197-212 are compositionally biased toward basic and acidic residues; that stretch reads PNIEKKRGKKDPDKKP. Residues 241–253 are compositionally biased toward pro residues; it reads NPPPHMMPPPPPA. Over residues 254–304 the composition is skewed to basic and acidic residues; that stretch reads KDAKDGKDAKDGKDAKTGKDGKDAKGGKDAKDLKDGKPADPKVTEEKRPSP.

It belongs to the clathrin light chain family. In terms of assembly, clathrin coats are formed from molecules containing 3 heavy chains and 3 light chains.

Its subcellular location is the cytoplasmic vesicle membrane. It localises to the membrane. The protein localises to the coated pit. In terms of biological role, clathrin is the major protein of the polyhedral coat of coated pits and vesicles. The protein is Clathrin light chain 1 of Arabidopsis thaliana (Mouse-ear cress).